The chain runs to 466 residues: L-seryl-tRNA(Sec) selenium transferase (466 aa).

N6-(pyridoxal phosphate)lysine is present on lysine 294.

Belongs to the SelA family. Pyridoxal 5'-phosphate is required as a cofactor.

The protein localises to the cytoplasm. It carries out the reaction L-seryl-tRNA(Sec) + selenophosphate + H(+) = L-selenocysteinyl-tRNA(Sec) + phosphate. It participates in aminoacyl-tRNA biosynthesis; selenocysteinyl-tRNA(Sec) biosynthesis; selenocysteinyl-tRNA(Sec) from L-seryl-tRNA(Sec) (bacterial route): step 1/1. Converts seryl-tRNA(Sec) to selenocysteinyl-tRNA(Sec) required for selenoprotein biosynthesis. The polypeptide is L-seryl-tRNA(Sec) selenium transferase (Carboxydothermus hydrogenoformans (strain ATCC BAA-161 / DSM 6008 / Z-2901)).